The sequence spans 140 residues: Putative nickel-responsive regulator (140 aa).

The Ni(2+) site is built by H81, H92, H94, and C100.

Belongs to the transcriptional regulatory CopG/NikR family. Ni(2+) serves as cofactor.

Transcriptional regulator. This Methanocella arvoryzae (strain DSM 22066 / NBRC 105507 / MRE50) protein is Putative nickel-responsive regulator.